The sequence spans 359 residues: WD repeat-containing protein 89 homolog (359 aa).

WD repeat units follow at residues 23-62 (IGDDTCYVLDLSVTPNLLAAAGSNYLIKIYDRSNNTILNV), 65-104 (GHKDAINETKFIENTNTLLSCSSDKTVKIWDTKTGQCSQT), 106-144 (NQQGEIFSIDLNGDILAMGVGSMVVLYNLSTKKMIRKFD), 146-186 (SHTE…DDDA), 192-232 (NAED…KIKH), and 294-333 (VHTDVIRNVFWDKFKSELITSSEDSKIGFWTNNPSITNIL).

This is WD repeat-containing protein 89 homolog (wdr89) from Dictyostelium discoideum (Social amoeba).